The chain runs to 70 residues: Large ribosomal subunit protein eL38 (70 aa).

Belongs to the eukaryotic ribosomal protein eL38 family.

This Anopheles gambiae (African malaria mosquito) protein is Large ribosomal subunit protein eL38 (RpL38).